Consider the following 212-residue polypeptide: GTP-binding protein EngB (212 aa).

An EngB-type G domain is found at 36-212 (TAPEVAFAGR…LRAAVYDAII (177 aa)). GTP contacts are provided by residues 44–51 (GRSNVGKS), 71–75 (GRTQE), 91–94 (DMPG), 158–161 (TKSD), and 192–194 (TSS). Mg(2+) contacts are provided by serine 51 and threonine 73.

Belongs to the TRAFAC class TrmE-Era-EngA-EngB-Septin-like GTPase superfamily. EngB GTPase family. Mg(2+) is required as a cofactor.

In terms of biological role, necessary for normal cell division and for the maintenance of normal septation. The chain is GTP-binding protein EngB from Zymomonas mobilis subsp. mobilis (strain ATCC 31821 / ZM4 / CP4).